The primary structure comprises 442 residues: Probable protein phosphatase 2C 15 (442 aa).

The 269-residue stretch at 35–303 folds into the PPM-type phosphatase domain; it reads AAERPELQVG…DDTTCIVVDI (269 aa). Residues D80, G81, D255, and D294 each contribute to the Mn(2+) site. Over residues 420–434 the composition is skewed to basic and acidic residues; it reads KKEAMEGKRRSRDSS. Positions 420–442 are disordered; that stretch reads KKEAMEGKRRSRDSSSRNSGSSE.

Belongs to the PP2C family. Requires Mg(2+) as cofactor. Mn(2+) serves as cofactor.

The enzyme catalyses O-phospho-L-seryl-[protein] + H2O = L-seryl-[protein] + phosphate. It carries out the reaction O-phospho-L-threonyl-[protein] + H2O = L-threonyl-[protein] + phosphate. This Oryza sativa subsp. japonica (Rice) protein is Probable protein phosphatase 2C 15.